A 783-amino-acid chain; its full sequence is Serine/threonine-protein kinase SIK1 (783 aa).

The 252-residue stretch at 27-278 folds into the Protein kinase domain; the sequence is YDIERTLGKG…IAQIRQHRWM (252 aa). Residues 33–41 and K56 contribute to the ATP site; that span reads LGKGNFAVV. The active-site Proton acceptor is D149. T182 bears the Phosphothreonine; by LKB1 and GSK3-beta mark. S186 is subject to Phosphoserine; by autocatalysis. A UBA domain is found at 303-343; that stretch reads DYDEQALGIMQTLGVDRQRTVESLQNSSYNHFAAIYYLLLE. T322 carries the post-translational modification Phosphothreonine; by CaMK1. Disordered regions lie at residues 353 to 377 and 449 to 477; these read CARPGPARQPRPRSSDLSGLEVPQE and RQGPGLEEEQDTQESLPSSTGRRHTLAEV. T473 is modified (phosphothreonine; by PKA). S575 is modified (phosphoserine; by PKA). The tract at residues 583-612 is RK-rich region; required for cAMP responsiveness and nuclear localization; the sequence is LKAFRQQLRKTTRTKGFLGLNKIKGLARQV. Residues 619–643 are disordered; it reads RASRGGLSPFHAPAQSPGLHGGAAG.

Belongs to the protein kinase superfamily. CAMK Ser/Thr protein kinase family. AMPK subfamily. Interacts with ATP1A1. Interacts (when phosphorylated on Thr-182 and Ser-186) with YWHAZ. Interacts (when phosphorylated at Thr-473 and/or Ser-575) with 14-3-3 proteins; the interaction inhibits kinase activity towards TORCs. There is a cooperative effect of the phosphorylation sites in 14-3-3 binding as the interaction is stronger when both Thr-473 and Ser-575 are modified. The cofactor is Mg(2+). Post-translationally, phosphorylated at Thr-182 by STK11/LKB1 in complex with STE20-related adapter-alpha (STRADA) pseudo kinase and CAB39, leading to its activation. Phosphorylation at Thr-182 promotes autophosphorylation at Ser-186, which is required for sustained activity. Autophosphorylation at Ser-186 is maintained by sequential phosphorylation at Thr-182 by GSK3-beta. GSK3-beta cannot initiate phosphorylation at Thr-182, it can only maintain it. Phosphorylation at Ser-575 in response to cAMP signaling promotes translocation to the cytoplasm. Phosphorylation at Thr-322 by CaMK1 following intracellular sodium concentration leads to activation.

It is found in the cytoplasm. The protein resides in the nucleus. It catalyses the reaction L-seryl-[protein] + ATP = O-phospho-L-seryl-[protein] + ADP + H(+). It carries out the reaction L-threonyl-[protein] + ATP = O-phospho-L-threonyl-[protein] + ADP + H(+). Its activity is regulated as follows. Activated by phosphorylation on Thr-182. Also activated by phosphorylation on Thr-322 in response to increases in intracellular sodium in parallel with elevations in intracellular calcium through the reversible sodium/calcium exchanger. Inhibited by phosphorylation at Thr-473 and Ser-575, probably by PKA, which triggers interaction with 14-3-3 proteins. Its function is as follows. Serine/threonine-protein kinase involved in various processes such as cell cycle regulation, gluconeogenesis and lipogenesis regulation, muscle growth and differentiation and tumor suppression. Phosphorylates HDAC4, HDAC5, PPME1, SREBF1, CRTC1/TORC1. Inhibits CREB activity by phosphorylating and inhibiting activity of TORCs, the CREB-specific coactivators, like CRTC2/TORC2 and CRTC3/TORC3 in response to cAMP signaling. Acts as a tumor suppressor and plays a key role in p53/TP53-dependent anoikis, a type of apoptosis triggered by cell detachment: required for phosphorylation of p53/TP53 in response to loss of adhesion and is able to suppress metastasis. Part of a sodium-sensing signaling network, probably by mediating phosphorylation of PPME1: following increases in intracellular sodium, SIK1 is activated by CaMK1 and phosphorylates PPME1 subunit of protein phosphatase 2A (PP2A), leading to dephosphorylation of sodium/potassium-transporting ATPase ATP1A1 and subsequent increase activity of ATP1A1. Acts as a regulator of muscle cells by phosphorylating and inhibiting class II histone deacetylases HDAC4 and HDAC5, leading to promote expression of MEF2 target genes in myocytes. Also required during cardiomyogenesis by regulating the exit of cardiomyoblasts from the cell cycle via down-regulation of CDKN1C/p57Kip2. Acts as a regulator of hepatic gluconeogenesis by phosphorylating and repressing the CREB-specific coactivators CRTC1/TORC1 and CRTC2/TORC2, leading to inhibit CREB activity. Also regulates hepatic lipogenesis by phosphorylating and inhibiting SREBF1. In concert with CRTC1/TORC1, regulates the light-induced entrainment of the circadian clock by attenuating PER1 induction; represses CREB-mediated transcription of PER1 by phosphorylating and deactivating CRTC1/TORC1. This Homo sapiens (Human) protein is Serine/threonine-protein kinase SIK1 (SIK1).